Consider the following 177-residue polypeptide: Large ribosomal subunit protein uL6 (177 aa).

It belongs to the universal ribosomal protein uL6 family. As to quaternary structure, part of the 50S ribosomal subunit.

Functionally, this protein binds to the 23S rRNA, and is important in its secondary structure. It is located near the subunit interface in the base of the L7/L12 stalk, and near the tRNA binding site of the peptidyltransferase center. This chain is Large ribosomal subunit protein uL6, found in Enterobacter sp. (strain 638).